The chain runs to 550 residues: Arginine--tRNA ligase (550 aa).

The 'HIGH' region signature appears at 130–140; sequence ANPTGPIHLGG.

This sequence belongs to the class-I aminoacyl-tRNA synthetase family. Monomer.

Its subcellular location is the cytoplasm. The catalysed reaction is tRNA(Arg) + L-arginine + ATP = L-arginyl-tRNA(Arg) + AMP + diphosphate. In Corynebacterium glutamicum (strain R), this protein is Arginine--tRNA ligase.